Reading from the N-terminus, the 317-residue chain is Transaldolase (317 aa).

Lysine 132 functions as the Schiff-base intermediate with substrate in the catalytic mechanism.

It belongs to the transaldolase family. Type 1 subfamily. Homodimer.

The protein resides in the cytoplasm. The catalysed reaction is D-sedoheptulose 7-phosphate + D-glyceraldehyde 3-phosphate = D-erythrose 4-phosphate + beta-D-fructose 6-phosphate. The protein operates within carbohydrate degradation; pentose phosphate pathway; D-glyceraldehyde 3-phosphate and beta-D-fructose 6-phosphate from D-ribose 5-phosphate and D-xylulose 5-phosphate (non-oxidative stage): step 2/3. Functionally, transaldolase is important for the balance of metabolites in the pentose-phosphate pathway. The chain is Transaldolase from Pseudoalteromonas atlantica (strain T6c / ATCC BAA-1087).